Consider the following 275-residue polypeptide: Large ribosomal subunit protein uL2 (275 aa).

Over residues 28 to 38 (RPYEPLVETKS) the composition is skewed to basic and acidic residues. 2 disordered regions span residues 28–53 (RPYEPLVETKSKSGGRNNVGRITTRH) and 222–275 (GVAM…RSAK). Over residues 254–275 (KGHKTRKNKRTDKMIVRRRSAK) the composition is skewed to basic residues.

It belongs to the universal ribosomal protein uL2 family. Part of the 50S ribosomal subunit. Forms a bridge to the 30S subunit in the 70S ribosome.

In terms of biological role, one of the primary rRNA binding proteins. Required for association of the 30S and 50S subunits to form the 70S ribosome, for tRNA binding and peptide bond formation. It has been suggested to have peptidyltransferase activity; this is somewhat controversial. Makes several contacts with the 16S rRNA in the 70S ribosome. The protein is Large ribosomal subunit protein uL2 of Marinobacter nauticus (strain ATCC 700491 / DSM 11845 / VT8) (Marinobacter aquaeolei).